The sequence spans 377 residues: MAAPRWSASGPWIRGNGQGCGSLFTLVSKPFCAAAAASTAINAQRLAEKLRAQKREQDTKKEPVSTNAVQRRVQEIVRFTRQLQRVHPNVLAKALTRGILHQDKNLVVINKPYGLPVHGGPGVQLCITDVLPILAKMLHGHKAEPLHLCHRLDKETTGVMVLAWDKDMAHQVQELFRTRQVVKKYWAITVHVPMPSAGVVDIPIVEKEAQGQQQHHKMTLSPSYRMDDGKMVKVRRSRNAQVAVTQYQVLSSTLSSALVELQPITGIKHQLRVHLSFGLDCPILGDHKYSDWNRLAPQKLSVGTLKKLGLEQSKARYIPLHLHARQLILPALGSGKEELNLVCKLPRFFVHSLHRLRLEMPNEDQNENNEAKCLGAQ.

Residues 1 to 15 (MAAPRWSASGPWIRG) constitute a mitochondrion transit peptide. Residues 36–62 (AASTAINAQRLAEKLRAQKREQDTKKE) are a coiled coil. Residue Asp-153 is part of the active site.

The protein belongs to the pseudouridine synthase RluA family. In terms of assembly, interacts with 16S mt-rRNA, mt-tRNA(Phe) and mt-tRNA(Met). Forms a regulatory protein-RNA complex, consisting of RCC1L, NGRN, RPUSD3, RPUSD4, TRUB2, FASTKD2 and 16S mt-rRNA.

The protein resides in the mitochondrion matrix. The protein localises to the nucleus. It localises to the cytoplasm. The catalysed reaction is uridine in 5S rRNA = pseudouridine in 5S rRNA. It carries out the reaction a uridine in tRNA = a pseudouridine in tRNA. The enzyme catalyses a uridine in mRNA = a pseudouridine in mRNA. Its function is as follows. Catalyzes uridine to pseudouridine isomerization (pseudouridylation) of different mitochondrial RNA substrates. Acts on position 1397 in 16S mitochondrial ribosomal RNA (16S mt-rRNA). This modification is required for the assembly of 16S mt-rRNA into a functional mitochondrial ribosome. As a component of a functional protein-RNA module, consisting of RCC1L, NGRN, RPUSD3, RPUSD4, TRUB2, FASTKD2 and 16S mt-rRNA, controls 16S mt-rRNA abundance and is required for intra-mitochondrial translation. Acts on position 39 in mitochondrial tRNA(Phe). Also catalyzes pseudouridylation of mRNAs in nucleus: acts as a regulator of pre-mRNA splicing by mediating pseudouridylation of pre-mRNAs at locations associated with alternatively spliced regions. Pseudouridylation of pre-mRNAs near splice sites directly regulates mRNA splicing and mRNA 3'-end processing. The sequence is that of Pseudouridylate synthase RPUSD4, mitochondrial from Homo sapiens (Human).